Consider the following 457-residue polypeptide: Metacaspase-1 (457 aa).

The disordered stretch occupies residues 1 to 149 (MSWNQYPGGG…PQLQGQGGQS (149 aa)). Gly residues predominate over residues 7–18 (PGGGHHQQGGYG). The segment covering 20–56 (RPPPPQWAQQGPPPPPNMGYRPPPPPQAYYNNPPPPQ) has biased composition (pro residues). The span at 57–83 (QYQRPAPQQNGYQQGGYQQQQQSQGNY) shows a compositional bias: low complexity. Active-site residues include H247 and C303.

Belongs to the peptidase C14B family.

Its function is as follows. Involved in cell death (apoptosis). The protein is Metacaspase-1 (MCA1) of Cryptococcus neoformans var. neoformans serotype D (strain JEC21 / ATCC MYA-565) (Filobasidiella neoformans).